A 345-amino-acid chain; its full sequence is Phosphoribosylformylglycinamidine cyclo-ligase (345 aa).

The protein belongs to the AIR synthase family.

Its subcellular location is the cytoplasm. It catalyses the reaction 2-formamido-N(1)-(5-O-phospho-beta-D-ribosyl)acetamidine + ATP = 5-amino-1-(5-phospho-beta-D-ribosyl)imidazole + ADP + phosphate + H(+). It participates in purine metabolism; IMP biosynthesis via de novo pathway; 5-amino-1-(5-phospho-D-ribosyl)imidazole from N(2)-formyl-N(1)-(5-phospho-D-ribosyl)glycinamide: step 2/2. This is Phosphoribosylformylglycinamidine cyclo-ligase from Sodalis glossinidius (strain morsitans).